The sequence spans 354 residues: Probable L-ascorbate-6-phosphate lactonase UlaG (354 aa).

Belongs to the UlaG family. A divalent metal cation serves as cofactor.

The protein localises to the cytoplasm. The catalysed reaction is L-ascorbate 6-phosphate + H2O = 3-dehydro-L-gulonate 6-phosphate. It participates in cofactor degradation; L-ascorbate degradation; D-xylulose 5-phosphate from L-ascorbate: step 1/4. Probably catalyzes the hydrolysis of L-ascorbate-6-P into 3-keto-L-gulonate-6-P. Is essential for L-ascorbate utilization under anaerobic conditions. The chain is Probable L-ascorbate-6-phosphate lactonase UlaG from Salmonella gallinarum (strain 287/91 / NCTC 13346).